The chain runs to 585 residues: CTP synthase (585 aa).

The interval 1–281 (MPALRKHPHT…DAYVVRRLNL (281 aa)) is amidoligase domain. Position 23 (Ser-23) interacts with CTP. Ser-23 is a binding site for UTP. Residues 24-29 (SLGKGL) and Asp-81 contribute to the ATP site. Asp-81 and Glu-155 together coordinate Mg(2+). CTP contacts are provided by residues 162–164 (DIE), 202–207 (KTKPTQ), and Lys-238. UTP is bound by residues 202–207 (KTKPTQ) and Lys-238. A Glutamine amidotransferase type-1 domain is found at 306 to 554 (RIALVGKYID…VGAAVEYNNG (249 aa)). L-glutamine is bound at residue Gly-369. Cys-396 functions as the Nucleophile; for glutamine hydrolysis in the catalytic mechanism. Residues 397-400 (LGLQ), Glu-419, and Arg-480 each bind L-glutamine. Active-site residues include His-527 and Glu-529. The segment at 564-585 (IPTADHQSNGAEHALEDAPARG) is disordered. The span at 576–585 (HALEDAPARG) shows a compositional bias: basic and acidic residues.

It belongs to the CTP synthase family. As to quaternary structure, homotetramer.

The enzyme catalyses UTP + L-glutamine + ATP + H2O = CTP + L-glutamate + ADP + phosphate + 2 H(+). It catalyses the reaction L-glutamine + H2O = L-glutamate + NH4(+). It carries out the reaction UTP + NH4(+) + ATP = CTP + ADP + phosphate + 2 H(+). It participates in pyrimidine metabolism; CTP biosynthesis via de novo pathway; CTP from UDP: step 2/2. With respect to regulation, allosterically activated by GTP, when glutamine is the substrate; GTP has no effect on the reaction when ammonia is the substrate. The allosteric effector GTP functions by stabilizing the protein conformation that binds the tetrahedral intermediate(s) formed during glutamine hydrolysis. Inhibited by the product CTP, via allosteric rather than competitive inhibition. Functionally, catalyzes the ATP-dependent amination of UTP to CTP with either L-glutamine or ammonia as the source of nitrogen. Regulates intracellular CTP levels through interactions with the four ribonucleotide triphosphates. The polypeptide is CTP synthase (Mycolicibacterium gilvum (strain PYR-GCK) (Mycobacterium gilvum (strain PYR-GCK))).